A 482-amino-acid polypeptide reads, in one-letter code: Probable polyamine transporter At1g31820 (482 aa).

Helical transmembrane passes span 36-56 (VSML…PFGA), 66-86 (LLAL…EALI), 94-114 (FPIN…FWGF), 143-163 (VPAL…TLLL), 171-191 (LTIV…PFAV), 254-274 (VIFV…AIPL), 294-314 (GWLQ…MFLA), 344-364 (TPLL…GLSF), 367-387 (IIAA…IAFV), 406-426 (TVGS…VIVL), and 429-449 (IKVA…KPCL).

It belongs to the amino acid-polyamine-organocation (APC) superfamily. Polyamine:cation symporter (PHS) (TC 2.A.3.12) family.

Its subcellular location is the cell membrane. Its function is as follows. Probable cell membrane polyamine/proton symporter involved in the polyamine uptake in cells. The sequence is that of Probable polyamine transporter At1g31820 from Arabidopsis thaliana (Mouse-ear cress).